Consider the following 623-residue polypeptide: Quinoprotein ethanol dehydrogenase (623 aa).

A signal peptide spans 1–34; it reads MTIRSLPAALSPLSMAVQAVLLVSSLALAPAANA. Ca(2+)-binding residues include Asp-45 and Asn-51. Residue Glu-95 participates in pyrroloquinoline quinone binding. A disulfide bridge links Cys-139 with Cys-140. Residues Arg-145, Thr-189, and 207–209 contribute to the pyrroloquinoline quinone site; that span reads HGS. Ca(2+) is bound at residue Glu-213. The interval 242-279 is disordered; that stretch reads GRLNGKDSTPTGDVKAPSWPDDPTTETGKVESWSHGGG. Positions 300 and 350 each coordinate Ca(2+). Catalysis depends on Asp-350, which acts as the Proton acceptor. Arg-378 is a binding site for pyrroloquinoline quinone. Positions 414–436 are disordered; sequence RPVENEGQRPAKPLPGETKGKPV. WD repeat units follow at residues 515 to 556 and 559 to 601; these read EHNE…ELWK and TGSG…LTKP. Residues Trp-523 and Ala-587 each contribute to the pyrroloquinoline quinone site.

It belongs to the bacterial PQQ dehydrogenase family. As to quaternary structure, homodimer. It depends on pyrroloquinoline quinone as a cofactor. The cofactor is Ca(2+).

Its subcellular location is the periplasm. The catalysed reaction is a primary alcohol + 2 Fe(III)-[cytochrome c] = an aldehyde + 2 Fe(II)-[cytochrome c] + 2 H(+). The enzyme catalyses ethanol + 2 Fe(III)-[cytochrome c] = acetaldehyde + 2 Fe(II)-[cytochrome c] + 2 H(+). It carries out the reaction ethanol + A = acetaldehyde + AH2. It catalyses the reaction 1-propanol + 2 Fe(III)-[cytochrome c] = propanal + 2 Fe(II)-[cytochrome c] + 2 H(+). Its pathway is alcohol metabolism; ethanol degradation; acetate from ethanol: step 1/2. With respect to regulation, enhanced by the presence of ethylamine or NH4(+) ions. In terms of biological role, catalyzes the oxidation of ethanol and other primary alcohols to the corresponding aldehydes, except methanol, which is not a substrate. Uses a specific inducible cytochrome c550, encoded by the adjacent gene in the locus, as electron acceptor. Is a key enzyme of the carbon and energy metabolism during growth of P.putida on ethanol as the sole carbon and energy source. Displays lower activity on secondary alcohols, aldehydes and diols. Is not active with sugar alcohols such as glycerol and D-sorbitol. In vitro, reacts well with phenazine methosulfate (PMS) as an electron acceptor but not with NAD(P), potassium ferricyanide, or molecular oxygen. In Pseudomonas putida (Arthrobacter siderocapsulatus), this protein is Quinoprotein ethanol dehydrogenase.